The following is a 276-amino-acid chain: D-apionate oxidoisomerase (276 aa).

NAD(+)-binding positions include 12–14, Glu33, and Asp69; that span reads GKM. Positions 114 and 184 each coordinate Zn(2+).

This sequence belongs to the ApnO family. It depends on Zn(2+) as a cofactor.

It carries out the reaction D-apionate + NAD(+) = 3-oxoisoapionate + NADH + H(+). The protein operates within carbohydrate metabolism. Its function is as follows. Involved in catabolism of D-apiose. Catalyzes the conversion of D-apionate to 3-oxo-isoapionate. This chain is D-apionate oxidoisomerase, found in Cupriavidus necator (strain ATCC 43291 / DSM 13513 / CCUG 52238 / LMG 8453 / N-1) (Ralstonia eutropha).